Reading from the N-terminus, the 165-residue chain is Phosphopantetheine adenylyltransferase (165 aa).

Thr-9 contacts substrate. Residues 9 to 10 (TF) and His-17 contribute to the ATP site. Residues Lys-41, Leu-73, and Arg-87 each coordinate substrate. ATP-binding positions include 88–90 (GLR), Glu-98, and 123–129 (LQPIASR).

This sequence belongs to the bacterial CoaD family. As to quaternary structure, homohexamer. Mg(2+) is required as a cofactor.

It is found in the cytoplasm. It carries out the reaction (R)-4'-phosphopantetheine + ATP + H(+) = 3'-dephospho-CoA + diphosphate. Its pathway is cofactor biosynthesis; coenzyme A biosynthesis; CoA from (R)-pantothenate: step 4/5. Functionally, reversibly transfers an adenylyl group from ATP to 4'-phosphopantetheine, yielding dephospho-CoA (dPCoA) and pyrophosphate. This Rhizorhabdus wittichii (strain DSM 6014 / CCUG 31198 / JCM 15750 / NBRC 105917 / EY 4224 / RW1) (Sphingomonas wittichii) protein is Phosphopantetheine adenylyltransferase.